We begin with the raw amino-acid sequence, 292 residues long: MTFQELIFALENYWAKQGCVIQQPYDIEVGAGTFNPATFLRALGPEPWNVAYVEPSRRPTDGRYGENPNRLQHYYQYQVIMKPSPLNIQELYLDSLRSFGIDPLEHDIRFVEDDWESPTVGAWGLGWEVWLDGMEISQFTYFQQVGGIDVKPVCAELTYGIERIAMYIQGIDNVYDLQWNDSIKYGDVHHQGEVEFSTYNFEVADVDMLRKLFDMYEAEAIRTAEKDLVLPAYDYCLKCSHTFNLLNARGAISVAERTSYIGRVRNLARISAEGYIRQRERMGFPLLNRSED.

This sequence belongs to the class-II aminoacyl-tRNA synthetase family. As to quaternary structure, tetramer of two alpha and two beta subunits.

The protein resides in the cytoplasm. It carries out the reaction tRNA(Gly) + glycine + ATP = glycyl-tRNA(Gly) + AMP + diphosphate. In Syntrophus aciditrophicus (strain SB), this protein is Glycine--tRNA ligase alpha subunit.